A 119-amino-acid chain; its full sequence is Large ribosomal subunit protein uL18 (119 aa).

This sequence belongs to the universal ribosomal protein uL18 family. As to quaternary structure, part of the 50S ribosomal subunit; part of the 5S rRNA/L5/L18/L25 subcomplex. Contacts the 5S and 23S rRNAs.

This is one of the proteins that bind and probably mediate the attachment of the 5S RNA into the large ribosomal subunit, where it forms part of the central protuberance. The protein is Large ribosomal subunit protein uL18 of Cupriavidus metallidurans (strain ATCC 43123 / DSM 2839 / NBRC 102507 / CH34) (Ralstonia metallidurans).